A 407-amino-acid polypeptide reads, in one-letter code: Tyrosine--tRNA ligase (407 aa).

Tyr36 is an L-tyrosine binding site. Residues Pro41–His50 carry the 'HIGH' region motif. L-tyrosine contacts are provided by Tyr169 and Gln173. The 'KMSKS' region motif lies at Lys229–Thr233. Lys232 contributes to the ATP binding site. The S4 RNA-binding domain occupies Lys341–Glu407.

This sequence belongs to the class-I aminoacyl-tRNA synthetase family. TyrS type 1 subfamily. As to quaternary structure, homodimer.

Its subcellular location is the cytoplasm. It catalyses the reaction tRNA(Tyr) + L-tyrosine + ATP = L-tyrosyl-tRNA(Tyr) + AMP + diphosphate + H(+). Its function is as follows. Catalyzes the attachment of tyrosine to tRNA(Tyr) in a two-step reaction: tyrosine is first activated by ATP to form Tyr-AMP and then transferred to the acceptor end of tRNA(Tyr). In Clostridium tetani (strain Massachusetts / E88), this protein is Tyrosine--tRNA ligase.